The primary structure comprises 133 residues: Ribosome-binding factor A (133 aa).

This sequence belongs to the RbfA family. As to quaternary structure, monomer. Binds 30S ribosomal subunits, but not 50S ribosomal subunits or 70S ribosomes.

The protein localises to the cytoplasm. Functionally, one of several proteins that assist in the late maturation steps of the functional core of the 30S ribosomal subunit. Associates with free 30S ribosomal subunits (but not with 30S subunits that are part of 70S ribosomes or polysomes). Required for efficient processing of 16S rRNA. May interact with the 5'-terminal helix region of 16S rRNA. This Bordetella parapertussis (strain 12822 / ATCC BAA-587 / NCTC 13253) protein is Ribosome-binding factor A.